Consider the following 283-residue polypeptide: Isochorismatase domain-containing protein 1 (283 aa).

This sequence belongs to the isochorismatase family.

This Salmo salar (Atlantic salmon) protein is Isochorismatase domain-containing protein 1 (isoc1).